A 475-amino-acid polypeptide reads, in one-letter code: V-type ATP synthase beta chain (475 aa).

The protein belongs to the ATPase alpha/beta chains family.

Produces ATP from ADP in the presence of a proton gradient across the membrane. The V-type beta chain is a regulatory subunit. The polypeptide is V-type ATP synthase beta chain (Anaeromyxobacter dehalogenans (strain 2CP-C)).